Consider the following 261-residue polypeptide: Zinc finger protein 664 (261 aa).

9 C2H2-type zinc fingers span residues 3–25 (YKCP…QKIH), 31–53 (HKCD…WRDH), 59–81 (YKCD…KKIH), 87–109 (YKCY…MRVH), 115–137 (YVCS…QRVH), 143–165 (FKCE…QRVH), 171–193 (YKCY…QRVH), 199–221 (YRCC…QRVH), and 227–249 (FKCD…QRVH). A Glycyl lysine isopeptide (Lys-Gly) (interchain with G-Cter in SUMO2) cross-link involves residue Lys257.

Belongs to the krueppel C2H2-type zinc-finger protein family.

It localises to the nucleus. Its function is as follows. May be involved in transcriptional regulation. In Mus musculus (Mouse), this protein is Zinc finger protein 664 (Znf664).